The sequence spans 356 residues: UDP-N-acetylglucosamine--N-acetylmuramyl-(pentapeptide) pyrophosphoryl-undecaprenol N-acetylglucosamine transferase (356 aa).

UDP-N-acetyl-alpha-D-glucosamine contacts are provided by residues 15–17 (TGG), N127, R163, S191, I244, 263–268 (ALTVSE), and Q288.

The protein belongs to the glycosyltransferase 28 family. MurG subfamily.

It is found in the cell inner membrane. It catalyses the reaction di-trans,octa-cis-undecaprenyl diphospho-N-acetyl-alpha-D-muramoyl-L-alanyl-D-glutamyl-meso-2,6-diaminopimeloyl-D-alanyl-D-alanine + UDP-N-acetyl-alpha-D-glucosamine = di-trans,octa-cis-undecaprenyl diphospho-[N-acetyl-alpha-D-glucosaminyl-(1-&gt;4)]-N-acetyl-alpha-D-muramoyl-L-alanyl-D-glutamyl-meso-2,6-diaminopimeloyl-D-alanyl-D-alanine + UDP + H(+). Its pathway is cell wall biogenesis; peptidoglycan biosynthesis. Functionally, cell wall formation. Catalyzes the transfer of a GlcNAc subunit on undecaprenyl-pyrophosphoryl-MurNAc-pentapeptide (lipid intermediate I) to form undecaprenyl-pyrophosphoryl-MurNAc-(pentapeptide)GlcNAc (lipid intermediate II). The polypeptide is UDP-N-acetylglucosamine--N-acetylmuramyl-(pentapeptide) pyrophosphoryl-undecaprenol N-acetylglucosamine transferase (Klebsiella pneumoniae subsp. pneumoniae (strain ATCC 700721 / MGH 78578)).